The chain runs to 117 residues: 5-hydroxyisourate hydrolase (117 aa).

Substrate is bound by residues His-7, Arg-45, and Tyr-114.

The protein belongs to the transthyretin family. 5-hydroxyisourate hydrolase subfamily. In terms of assembly, homotetramer.

It carries out the reaction 5-hydroxyisourate + H2O = 5-hydroxy-2-oxo-4-ureido-2,5-dihydro-1H-imidazole-5-carboxylate + H(+). Its function is as follows. Catalyzes the hydrolysis of 5-hydroxyisourate (HIU) to 2-oxo-4-hydroxy-4-carboxy-5-ureidoimidazoline (OHCU). This is 5-hydroxyisourate hydrolase from Ralstonia nicotianae (strain ATCC BAA-1114 / GMI1000) (Ralstonia solanacearum).